Here is a 201-residue protein sequence, read N- to C-terminus: uncharacterized protein (201 aa).

This is an uncharacterized protein from Lepidoptera (butterflies and moths).